The sequence spans 119 residues: Ribonuclease P protein component (119 aa).

Belongs to the RnpA family. Consists of a catalytic RNA component (M1 or rnpB) and a protein subunit.

It carries out the reaction Endonucleolytic cleavage of RNA, removing 5'-extranucleotides from tRNA precursor.. In terms of biological role, RNaseP catalyzes the removal of the 5'-leader sequence from pre-tRNA to produce the mature 5'-terminus. It can also cleave other RNA substrates such as 4.5S RNA. The protein component plays an auxiliary but essential role in vivo by binding to the 5'-leader sequence and broadening the substrate specificity of the ribozyme. The sequence is that of Ribonuclease P protein component from Streptococcus pyogenes serotype M1.